Here is a 276-residue protein sequence, read N- to C-terminus: Large ribosomal subunit protein uL2 (276 aa).

The tract at residues 225-276 (MNPVDHPHGGGEGRAPVGRKHPVTPWGKPAMGAKTRKKRKLSDKLIVKPRNK) is disordered. The segment covering 258–276 (KTRKKRKLSDKLIVKPRNK) has biased composition (basic residues).

It belongs to the universal ribosomal protein uL2 family. Part of the 50S ribosomal subunit. Forms a bridge to the 30S subunit in the 70S ribosome.

Its function is as follows. One of the primary rRNA binding proteins. Required for association of the 30S and 50S subunits to form the 70S ribosome, for tRNA binding and peptide bond formation. It has been suggested to have peptidyltransferase activity; this is somewhat controversial. Makes several contacts with the 16S rRNA in the 70S ribosome. The sequence is that of Large ribosomal subunit protein uL2 from Moorella thermoacetica (strain ATCC 39073 / JCM 9320).